Here is a 622-residue protein sequence, read N- to C-terminus: 1,4-alpha-glucan branching enzyme GlgB (622 aa).

The active-site Nucleophile is Asp300. The active-site Proton donor is Glu351.

It belongs to the glycosyl hydrolase 13 family. GlgB subfamily. In terms of assembly, monomer.

The catalysed reaction is Transfers a segment of a (1-&gt;4)-alpha-D-glucan chain to a primary hydroxy group in a similar glucan chain.. Its pathway is glycan biosynthesis; glycogen biosynthesis. Catalyzes the formation of the alpha-1,6-glucosidic linkages in glycogen by scission of a 1,4-alpha-linked oligosaccharide from growing alpha-1,4-glucan chains and the subsequent attachment of the oligosaccharide to the alpha-1,6 position. This Streptococcus agalactiae serotype V (strain ATCC BAA-611 / 2603 V/R) protein is 1,4-alpha-glucan branching enzyme GlgB.